The following is a 255-amino-acid chain: 28.1 kDa virulence protein (255 aa).

It belongs to the SpvA family.

Its function is as follows. Not known. This protein is involved in the virulence of salmonellas. The chain is 28.1 kDa virulence protein (mkaB) from Salmonella typhimurium.